A 91-amino-acid chain; its full sequence is MKKLVLLFALVLLAFQVQADSIQNTDEETKTEEQPGEKDQAVSVSFGDPQGSALQDAALGWGRRCPQCPRCPSCPSCPRCPRCPRCKCNPK.

Positions 1–19 (MKKLVLLFALVLLAFQVQA) are cleaved as a signal peptide. A propeptide spanning residues 20–58 (DSIQNTDEETKTEEQPGEKDQAVSVSFGDPQGSALQDAA) is cleaved from the precursor. The segment at 22–48 (IQNTDEETKTEEQPGEKDQAVSVSFGD) is disordered. Residues 27-40 (EETKTEEQPGEKDQ) are compositionally biased toward basic and acidic residues. Repeat copies occupy residues 65 to 67 (CPQ), 68 to 70 (CPR), 71 to 73 (CPS), 74 to 76 (CPS), 77 to 79 (CPR), 80 to 82 (CPR), and 83 to 85 (CPR). A 7 X 3 AA tandem repeats of C-P-X region spans residues 65–85 (CPQCPRCPSCPSCPRCPRCPR).

The protein belongs to the alpha-defensin family. Small bowel, spleen, colon, kidney, liver, stomach and femur marrow.

The protein resides in the secreted. Functionally, apparent precursor of a secreted, cationic, proline- and cysteine-rich peptide that contains Cys-Pro-Xaa repeats. Unlike cryptdin, the proposed mature peptide region lacks the structural motif characteristic of defensins. It may have microbicidal activities. This Mus musculus (Mouse) protein is Alpha-defensin-related sequence 2 (Defa-rs2).